The primary structure comprises 166 residues: UPF0304 protein PBPRA2768 (166 aa).

It belongs to the UPF0304 family.

The sequence is that of UPF0304 protein PBPRA2768 from Photobacterium profundum (strain SS9).